Consider the following 244-residue polypeptide: Kallikrein-6 (244 aa).

An N-terminal signal peptide occupies residues 1–16 (MKKLMVVLSLIAAAWA). A propeptide spans 17-21 (EEQNK) (activation peptide). Residues 22 to 242 (LVHGGPCDKT…YTNWIQKTIQ (221 aa)) enclose the Peptidase S1 domain. Cystine bridges form between Cys-28–Cys-157, Cys-47–Cys-63, Cys-131–Cys-231, Cys-138–Cys-203, Cys-168–Cys-182, and Cys-193–Cys-218. Residues His-62 and Asp-106 each act as charge relay system in the active site. Residue Asn-134 is glycosylated (N-linked (GlcNAc...) asparagine). Catalysis depends on Ser-197, which acts as the Charge relay system.

Inactivated by autolytic cleavage after Arg-80. In fluids, highest levels found in milk of lactating women followed by cerebrospinal fluid, nipple aspirate fluid and breast cyst fluid. Also found in serum, seminal plasma and some amniotic fluids and breast tumor cytosolic extracts. Not detected in urine. At the tissue level, highest concentrations found in glandular tissues such as salivary glands followed by lung, colon, fallopian tube, placenta, breast, pituitary and kidney. Not detected in skin, spleen, bone, thyroid, heart, ureter, liver, muscle, endometrium, testis, pancreas, seminal vesicle, ovary, adrenals and prostate. In brain, detected in gray matter neurons (at protein level). Colocalizes with pathological inclusions such as Lewy bodies and glial cytoplasmic inclusions. Overexpressed in primary breast tumors but not expressed in metastatic tumors.

The protein resides in the secreted. It localises to the nucleus. The protein localises to the nucleolus. Its subcellular location is the cytoplasm. It is found in the mitochondrion. The protein resides in the microsome. With respect to regulation, inhibited by a range of serine protease inhibitors including soybean trypsin inhibitor, benzamidine and serpins. Activated by a range of glycosaminoglycans including chondroitin sulfate, dermatan sulfate, heparan sulfate and heparin. In terms of biological role, serine protease which exhibits a preference for Arg over Lys in the substrate P1 position and for Ser or Pro in the P2 position. Shows activity against amyloid precursor protein, myelin basic protein, gelatin, casein and extracellular matrix proteins such as fibronectin, laminin, vitronectin and collagen. Degrades alpha-synuclein and prevents its polymerization, indicating that it may be involved in the pathogenesis of Parkinson disease and other synucleinopathies. May be involved in regulation of axon outgrowth following spinal cord injury. Tumor cells treated with a neutralizing KLK6 antibody migrate less than control cells, suggesting a role in invasion and metastasis. The polypeptide is Kallikrein-6 (KLK6) (Homo sapiens (Human)).